The primary structure comprises 296 residues: Phosphatidylglycerol--prolipoprotein diacylglyceryl transferase (296 aa).

Helical transmembrane passes span 17–37 (LAVRWYGLMYLVGFIFAIVVG), 59–79 (MMFYGVLGVVLGGRLGYVLFY), and 97–117 (GGMSFHGGFLGVTLAMALFAW). A 1,2-diacyl-sn-glycero-3-phospho-(1'-sn-glycerol) is bound at residue Arg-142. 2 consecutive transmembrane segments (helical) span residues 230–250 (MGAISALFLIGYGAARFTVEF) and 265–285 (LSMGQWLSLPMIVAGVLMMIW).

This sequence belongs to the Lgt family.

The protein localises to the cell inner membrane. It catalyses the reaction L-cysteinyl-[prolipoprotein] + a 1,2-diacyl-sn-glycero-3-phospho-(1'-sn-glycerol) = an S-1,2-diacyl-sn-glyceryl-L-cysteinyl-[prolipoprotein] + sn-glycerol 1-phosphate + H(+). It participates in protein modification; lipoprotein biosynthesis (diacylglyceryl transfer). Catalyzes the transfer of the diacylglyceryl group from phosphatidylglycerol to the sulfhydryl group of the N-terminal cysteine of a prolipoprotein, the first step in the formation of mature lipoproteins. The sequence is that of Phosphatidylglycerol--prolipoprotein diacylglyceryl transferase from Burkholderia pseudomallei (strain 668).